The primary structure comprises 285 residues: Dermonecrotic toxin LlSicTox-alphaIII2 (285 aa).

Histidine 12 is an active-site residue. Mg(2+) is bound by residues glutamate 32 and aspartate 34. The active-site Nucleophile is histidine 47. Cysteine 51 and cysteine 57 are joined by a disulfide. Aspartate 91 serves as a coordination point for Mg(2+).

This sequence belongs to the arthropod phospholipase D family. Class I subfamily. The cofactor is Mg(2+). As to expression, expressed by the venom gland.

Its subcellular location is the secreted. The enzyme catalyses an N-(acyl)-sphingosylphosphocholine = an N-(acyl)-sphingosyl-1,3-cyclic phosphate + choline. It catalyses the reaction an N-(acyl)-sphingosylphosphoethanolamine = an N-(acyl)-sphingosyl-1,3-cyclic phosphate + ethanolamine. It carries out the reaction a 1-acyl-sn-glycero-3-phosphocholine = a 1-acyl-sn-glycero-2,3-cyclic phosphate + choline. The catalysed reaction is a 1-acyl-sn-glycero-3-phosphoethanolamine = a 1-acyl-sn-glycero-2,3-cyclic phosphate + ethanolamine. In terms of biological role, dermonecrotic toxins cleave the phosphodiester linkage between the phosphate and headgroup of certain phospholipids (sphingolipid and lysolipid substrates), forming an alcohol (often choline) and a cyclic phosphate. This toxin acts on sphingomyelin (SM) (228.2 U/mg). It may also act on ceramide phosphoethanolamine (CPE), lysophosphatidylcholine (LPC) and lysophosphatidylethanolamine (LPE), but not on lysophosphatidylserine (LPS), and lysophosphatidylglycerol (LPG). It acts by transphosphatidylation, releasing exclusively cyclic phosphate products as second products. Induces dermonecrosis, hemolysis, increased vascular permeability, edema, inflammatory response, and platelet aggregation. Is lethal to mice. This is Dermonecrotic toxin LlSicTox-alphaIII2 from Loxosceles laeta (South American recluse spider).